The sequence spans 749 residues: Homeobox-leucine zipper protein ROC7 (749 aa).

Residues 26-98 (LDQHQQHQHQ…KKRYHRHTQH (73 aa)) form a disordered region. Positions 46-57 (SDGRAPRDELEM) are enriched in basic and acidic residues. Gly residues predominate over residues 68–78 (SGGGGGGGGSG). Residues 86–97 (RPRKKRYHRHTQ) are compositionally biased toward basic residues. The homeobox DNA-binding region spans 88–147 (RKKRYHRHTQHQIQELEAFFKECPHPDDKQRKELSRELGLEPLQVKFWFQNKRTQMKTQH). Residues 137–218 (QNKRTQMKTQ…DRISAIAAKY (82 aa)) adopt a coiled-coil conformation. An START domain is found at 256–494 (ADFDKPLVIE…LERQCERLAS (239 aa)).

The protein belongs to the HD-ZIP homeobox family. Class IV subfamily.

Its subcellular location is the nucleus. In terms of biological role, probable transcription factor. This is Homeobox-leucine zipper protein ROC7 (ROC7) from Oryza sativa subsp. indica (Rice).